The chain runs to 112 residues: 2Fe-2S ferredoxin (112 aa).

Positions 5 to 107 (IKVTFIVNDG…GIKVRLPSAT (103 aa)) constitute a 2Fe-2S ferredoxin-type domain. 4 residues coordinate [2Fe-2S] cluster: C42, C48, C51, and C88.

This sequence belongs to the adrenodoxin/putidaredoxin family. Requires [2Fe-2S] cluster as cofactor.

In terms of biological role, ferredoxin are iron-sulfur proteins that transfer electrons in a wide variety of metabolic reactions. This chain is 2Fe-2S ferredoxin (fdxB), found in Rickettsia felis (strain ATCC VR-1525 / URRWXCal2) (Rickettsia azadi).